The sequence spans 357 residues: Protein phosphatase 1 regulatory subunit 42 (357 aa).

LRR repeat units follow at residues 29–50 (KITH…SLCR), 51–72 (NLSV…NYTT), 73–94 (NLTH…SSLK), 95–116 (KLEK…EGLE), 117–138 (ELRE…LFDP), 147–168 (SLST…EILE), and 169–190 (NLNH…ELLL). An LRRCT domain is found at 204 to 242 (NPVCLKPKYRDKLILTSKSLEFLDGKEIKDMERQFLMNW). Residues 329 to 357 (ESSLTKNDIHEPHLLQNPKVKENLSEKKE) form a disordered region. Basic and acidic residues predominate over residues 335–357 (NDIHEPHLLQNPKVKENLSEKKE).

As to quaternary structure, interacts with PPP1CC isoform gamma-2; the interaction is direct. Interacts with actin, dynein, KIF5B, KIFC1 and tubulin. Associates with microtubules. Post-translationally, phosphorylated; during the first round of spermatogenesis with a marginal increase at 21 days after birth. Testis-specific. Expressed in spermatids (at protein level). Testis-specific.

The protein resides in the cytoplasm. It localises to the cytoskeleton. Its subcellular location is the microtubule organizing center. It is found in the centrosome. Functionally, regulates phosphatase activity of protein phosphatase 1 (PP1) complexes in the testis. This Mus musculus (Mouse) protein is Protein phosphatase 1 regulatory subunit 42 (Ppp1r42).